The sequence spans 41 residues: Photosystem I reaction center subunit IX (41 aa).

The helical transmembrane segment at 7 to 27 threads the bilayer; it reads YLSTAPVLLTIWLTFTAGFII.

The protein belongs to the PsaJ family.

The protein localises to the plastid. The protein resides in the chloroplast thylakoid membrane. May help in the organization of the PsaE and PsaF subunits. The protein is Photosystem I reaction center subunit IX of Phaeodactylum tricornutum (strain CCAP 1055/1).